The primary structure comprises 340 residues: Anthranilate phosphoribosyltransferase (340 aa).

Residues Gly-83, Gly-86 to Asp-87, Thr-91, Asn-93 to Thr-96, Lys-111 to Ser-119, and Ser-123 contribute to the 5-phospho-alpha-D-ribose 1-diphosphate site. Residue Gly-83 coordinates anthranilate. Mg(2+) is bound at residue Ser-95. Asn-114 contacts anthranilate. Arg-169 serves as a coordination point for anthranilate. Mg(2+) contacts are provided by Asp-228 and Glu-229.

The protein belongs to the anthranilate phosphoribosyltransferase family. In terms of assembly, homodimer. Mg(2+) serves as cofactor.

The enzyme catalyses N-(5-phospho-beta-D-ribosyl)anthranilate + diphosphate = 5-phospho-alpha-D-ribose 1-diphosphate + anthranilate. The protein operates within amino-acid biosynthesis; L-tryptophan biosynthesis; L-tryptophan from chorismate: step 2/5. Its function is as follows. Catalyzes the transfer of the phosphoribosyl group of 5-phosphorylribose-1-pyrophosphate (PRPP) to anthranilate to yield N-(5'-phosphoribosyl)-anthranilate (PRA). This chain is Anthranilate phosphoribosyltransferase, found in Aquifex aeolicus (strain VF5).